Consider the following 148-residue polypeptide: Large ribosomal subunit protein bL9 (148 aa).

Belongs to the bacterial ribosomal protein bL9 family.

Its function is as follows. Binds to the 23S rRNA. The polypeptide is Large ribosomal subunit protein bL9 (Azotobacter vinelandii (strain DJ / ATCC BAA-1303)).